The primary structure comprises 306 residues: Ribonuclease Z (306 aa).

7 residues coordinate Zn(2+): histidine 63, histidine 65, aspartate 67, histidine 68, histidine 141, aspartate 211, and histidine 269. The Proton acceptor role is filled by aspartate 67.

The protein belongs to the RNase Z family. In terms of assembly, homodimer. The cofactor is Zn(2+).

The enzyme catalyses Endonucleolytic cleavage of RNA, removing extra 3' nucleotides from tRNA precursor, generating 3' termini of tRNAs. A 3'-hydroxy group is left at the tRNA terminus and a 5'-phosphoryl group is left at the trailer molecule.. Functionally, zinc phosphodiesterase, which displays some tRNA 3'-processing endonuclease activity. Probably involved in tRNA maturation, by removing a 3'-trailer from precursor tRNA. This is Ribonuclease Z from Macrococcus caseolyticus (strain JCSC5402) (Macrococcoides caseolyticum).